A 249-amino-acid chain; its full sequence is Probable transcriptional regulatory protein OTT_1378 (249 aa).

It belongs to the TACO1 family.

It localises to the cytoplasm. The protein is Probable transcriptional regulatory protein OTT_1378 of Orientia tsutsugamushi (strain Ikeda) (Rickettsia tsutsugamushi).